Here is an 88-residue protein sequence, read N- to C-terminus: Cell division topological specificity factor (88 aa).

The protein belongs to the MinE family.

In terms of biological role, prevents the cell division inhibition by proteins MinC and MinD at internal division sites while permitting inhibition at polar sites. This ensures cell division at the proper site by restricting the formation of a division septum at the midpoint of the long axis of the cell. The sequence is that of Cell division topological specificity factor from Shewanella denitrificans (strain OS217 / ATCC BAA-1090 / DSM 15013).